Here is a 271-residue protein sequence, read N- to C-terminus: Cyanophycinase (271 aa).

Residues S132, H174, and E201 each act as charge relay system in the active site.

Belongs to the peptidase S51 family. Homodimer.

It carries out the reaction [L-4-(L-arginin-2-N-yl)aspartate](n) + H2O = [L-4-(L-arginin-2-N-yl)aspartate](n-1) + L-4-(L-arginin-2-N-yl)aspartate. Exopeptidase that catalyzes the hydrolytic cleavage of multi-L-arginyl-poly-L-aspartic acid (cyanophycin; a water-insoluble reserve polymer) into aspartate-arginine dipeptides. The polypeptide is Cyanophycinase (cphB) (Synechocystis sp. (strain ATCC 27184 / PCC 6803 / Kazusa)).